Reading from the N-terminus, the 304-residue chain is D-alanine--D-alanine ligase (304 aa).

The 196-residue stretch at 104-299 folds into the ATP-grasp domain; the sequence is KMVWLSCGLP…FEALCLAILA (196 aa). 130 to 185 contributes to the ATP binding site; that stretch reads ARDLGLPIFVKPVHEGSSMGATKVTEAGQLRAAWELAARYDSLVIAEEFISGQELT. 3 residues coordinate Mg(2+): Asp253, Glu266, and Asn268.

Belongs to the D-alanine--D-alanine ligase family. Requires Mg(2+) as cofactor. It depends on Mn(2+) as a cofactor.

It localises to the cytoplasm. It catalyses the reaction 2 D-alanine + ATP = D-alanyl-D-alanine + ADP + phosphate + H(+). It participates in cell wall biogenesis; peptidoglycan biosynthesis. Functionally, cell wall formation. The chain is D-alanine--D-alanine ligase from Azoarcus sp. (strain BH72).